A 97-amino-acid chain; its full sequence is Aspartyl/glutamyl-tRNA(Asn/Gln) amidotransferase subunit C (97 aa).

Residues 74–97 are disordered; sequence AEQALDQAPASQRDRFEVPRILGE. A compositionally biased stretch (basic and acidic residues) spans 85-97; that stretch reads QRDRFEVPRILGE.

It belongs to the GatC family. In terms of assembly, heterotrimer of A, B and C subunits.

The enzyme catalyses L-glutamyl-tRNA(Gln) + L-glutamine + ATP + H2O = L-glutaminyl-tRNA(Gln) + L-glutamate + ADP + phosphate + H(+). It carries out the reaction L-aspartyl-tRNA(Asn) + L-glutamine + ATP + H2O = L-asparaginyl-tRNA(Asn) + L-glutamate + ADP + phosphate + 2 H(+). Its function is as follows. Allows the formation of correctly charged Asn-tRNA(Asn) or Gln-tRNA(Gln) through the transamidation of misacylated Asp-tRNA(Asn) or Glu-tRNA(Gln) in organisms which lack either or both of asparaginyl-tRNA or glutaminyl-tRNA synthetases. The reaction takes place in the presence of glutamine and ATP through an activated phospho-Asp-tRNA(Asn) or phospho-Glu-tRNA(Gln). The chain is Aspartyl/glutamyl-tRNA(Asn/Gln) amidotransferase subunit C from Corynebacterium kroppenstedtii (strain DSM 44385 / JCM 11950 / CIP 105744 / CCUG 35717).